We begin with the raw amino-acid sequence, 791 residues long: KN motif and ankyrin repeat domain-containing protein 3 (791 aa).

5 disordered regions span residues 1-37, 56-181, 254-312, 401-425, and 463-514; these read MAKF…SVET, RGPA…GPAQ, ATSD…ETRE, GCTE…GDEM, and YESS…GDCE. Positions 25–34 are enriched in polar residues; sequence SARSPSSPYS. The span at 105 to 125 shows a compositional bias: low complexity; sequence LSPGAFPGLSLPPLSPRSLSR. Positions 127 to 149 are enriched in basic and acidic residues; it reads PRVEHTLLETSRRLEQAQARERA. 6 positions are modified to phosphoserine: Ser151, Ser159, Ser163, Ser166, Ser167, and Ser176. Over residues 158–180 the composition is skewed to low complexity; the sequence is RSPRGSGRSSPAPNPALASPGPA. Positions 180–229 form a coiled coil; it reads AQLQLVREQMAAALRRLRELEDQARALPELQEQVRALRAEKARLLAGRVQ. Composition is skewed to basic and acidic residues over residues 254–280 and 293–312; these read ATSD…RRSE and PDGE…ETRE. Ser279 carries the post-translational modification Phosphoserine. Residues 401–410 are compositionally biased toward polar residues; that stretch reads GCTEKTTQTE. A compositionally biased stretch (low complexity) spans 485-496; the sequence is SSSSGSDDSSGG. A compositionally biased stretch (basic and acidic residues) spans 505 to 514; it reads HNDKDAGDCE. ANK repeat units follow at residues 606–636, 640–677, 679–708, 712–742, and 746–775; these read NGNT…DVNH, AGYS…AKAS, TGQT…DVNV, DGAT…DLTI, and EGTS…SNHQ. Positions 772-783 are enriched in polar residues; sequence SNHQGQSSTGSP. Positions 772–791 are disordered; it reads SNHQGQSSTGSPTAKECNDK.

May be involved in the control of cytoskeleton formation by regulating actin polymerization. The chain is KN motif and ankyrin repeat domain-containing protein 3 from Mus musculus (Mouse).